Consider the following 355-residue polypeptide: DNA-binding protein RHL1 (355 aa).

Disordered stretches follow at residues methionine 1 to lysine 26, aspartate 181 to glutamate 215, and isoleucine 229 to alanine 355. Positions glycine 14–lysine 23 are enriched in basic and acidic residues. Low complexity-rich tracts occupy residues glutamine 230–valine 246 and alanine 260–asparagine 274. Basic and acidic residues-rich tracts occupy residues lysine 281–serine 296 and leucine 309–lysine 326. Low complexity predominate over residues alanine 344–alanine 355.

As to quaternary structure, interacts with BIN4 and TOP6A, but not with TOP6B. Expressed inproliferating and endoreduplicating cells.

The protein localises to the nucleus. In terms of biological role, component of the DNA topoisomerase VI complex involved in chromatin organization and progression of endoreduplication cycles. Binds to DNA. Required for endoreduplication beyond 8C. This is DNA-binding protein RHL1 (RHL1) from Arabidopsis thaliana (Mouse-ear cress).